The sequence spans 376 residues: Chaperone protein DnaJ (376 aa).

The J domain maps to 5 to 69; the sequence is DYYEVLGVSK…QKRAQYDQYG (65 aa). The segment at 133–215 adopts a CR-type zinc-finger fold; the sequence is GKDAEIEIPR…CHGKGRVTKT (83 aa). Zn(2+) is bound by residues Cys146, Cys149, Cys163, Cys166, Cys189, Cys192, Cys203, and Cys206. CXXCXGXG motif repeat units lie at residues 146 to 153, 163 to 170, 189 to 196, and 203 to 210; these read CDTCHGSG, CSHCGGKG, CQYCNGTG, and CPTCHGKG.

This sequence belongs to the DnaJ family. In terms of assembly, homodimer. Zn(2+) is required as a cofactor.

It is found in the cytoplasm. Participates actively in the response to hyperosmotic and heat shock by preventing the aggregation of stress-denatured proteins and by disaggregating proteins, also in an autonomous, DnaK-independent fashion. Unfolded proteins bind initially to DnaJ; upon interaction with the DnaJ-bound protein, DnaK hydrolyzes its bound ATP, resulting in the formation of a stable complex. GrpE releases ADP from DnaK; ATP binding to DnaK triggers the release of the substrate protein, thus completing the reaction cycle. Several rounds of ATP-dependent interactions between DnaJ, DnaK and GrpE are required for fully efficient folding. Also involved, together with DnaK and GrpE, in the DNA replication of plasmids through activation of initiation proteins. This chain is Chaperone protein DnaJ, found in Listeria monocytogenes serotype 4b (strain CLIP80459).